The following is a 44-amino-acid chain: Defensin-like peptide (44 aa).

Disulfide bonds link Cys-7–Cys-32, Cys-18–Cys-40, and Cys-22–Cys-42.

In terms of tissue distribution, hemolymph.

It is found in the secreted. Has antibacterial activity against the Gram-positive bacterium S.lutea (MIC=1.9 uM). Lacks antibacterial activity against the Gram-positive bacteria L.monocytogenes and M.luteus, and the Gram-negative bacteria E.coli D31, E.coli ATCC 25922, and S.typhimurium. Has antifungal activity against A.niger (MIC=2.9 uM), C.albicans (MIC=2.9 uM), C.fructus (MIC=2.9 uM), C.wickerhamii (MIC=2.9 uM), P.pastoris (MIC=2.9 uM), P.stiptis (MIC=2.9 uM), P.tannophilus (MIC=2.9 uM), T.harzianum (MIC=2.9 uM), and Z.marxianus (MIC=2.9 uM), but lacks antifungal activity against C.albidus, F.oxysporum, and S.cerevisiae. This Galleria mellonella (Greater wax moth) protein is Defensin-like peptide.